The primary structure comprises 240 residues: tRNA pseudouridine synthase B (240 aa).

Asp-54 functions as the Nucleophile in the catalytic mechanism.

This sequence belongs to the pseudouridine synthase TruB family. Type 1 subfamily.

The enzyme catalyses uridine(55) in tRNA = pseudouridine(55) in tRNA. Its function is as follows. Responsible for synthesis of pseudouridine from uracil-55 in the psi GC loop of transfer RNAs. This chain is tRNA pseudouridine synthase B, found in Chlorobium phaeovibrioides (strain DSM 265 / 1930) (Prosthecochloris vibrioformis (strain DSM 265)).